The sequence spans 104 residues: Transcription factor ILI1 (104 aa).

Over residues 1–11 (MSSSRRSRSRR) the composition is skewed to basic residues. The tract at residues 1 to 27 (MSSSRRSRSRRAGSSVPSSSSSSRTSI) is disordered. Residues 12–27 (AGSSVPSSSSSSRTSI) show a composition bias toward low complexity. Residues 16 to 71 (VPSSSSSSRTSISEDQIAELLSKLQALLPESQARNGAHRGSAARVLQETCSYIRSL) form the bHLH domain.

This sequence belongs to the bHLH protein family. As to quaternary structure, interacts with IBH1.

Functionally, atypical and probable non DNA-binding bHLH transcription factor that acts as a positive regulator of cell elongation and plant development. Binds the transcription repressor IBH1 and forms a heterodimer of antagonistic bHLH transcription factors that function downstream of BZR1 to mediate brassinosteroid regulation of cell elongation and lamina inclination. The chain is Transcription factor ILI1 (ILI1) from Oryza sativa subsp. indica (Rice).